The primary structure comprises 396 residues: Elongation factor Tu (396 aa).

One can recognise a tr-type G domain in the interval 10–206; that stretch reads KPHVNVGTIG…ALDSYIPEPT (197 aa). Residues 19–26 form a G1 region; it reads GHVDHGKT. 19–26 provides a ligand contact to GTP; it reads GHVDHGKT. A Mg(2+)-binding site is contributed by Thr26. The interval 60–64 is G2; the sequence is GITIS. The G3 stretch occupies residues 81 to 84; sequence DCPG. GTP is bound by residues 81–85 and 136–139; these read DCPGH and NKAD. Positions 136–139 are G4; that stretch reads NKAD. A G5 region spans residues 174-176; it reads SAL.

It belongs to the TRAFAC class translation factor GTPase superfamily. Classic translation factor GTPase family. EF-Tu/EF-1A subfamily. In terms of assembly, monomer.

It is found in the cytoplasm. It catalyses the reaction GTP + H2O = GDP + phosphate + H(+). Functionally, GTP hydrolase that promotes the GTP-dependent binding of aminoacyl-tRNA to the A-site of ribosomes during protein biosynthesis. This is Elongation factor Tu from Hydrogenovibrio crunogenus (strain DSM 25203 / XCL-2) (Thiomicrospira crunogena).